The primary structure comprises 315 residues: Acetyl-coenzyme A carboxylase carboxyl transferase subunit alpha (315 aa).

One can recognise a CoA carboxyltransferase C-terminal domain in the interval 40–293 (LEDKKIALTK…KKNVLAALDR (254 aa)).

It belongs to the AccA family. In terms of assembly, acetyl-CoA carboxylase is a heterohexamer composed of biotin carboxyl carrier protein (AccB), biotin carboxylase (AccC) and two subunits each of ACCase subunit alpha (AccA) and ACCase subunit beta (AccD).

The protein resides in the cytoplasm. The catalysed reaction is N(6)-carboxybiotinyl-L-lysyl-[protein] + acetyl-CoA = N(6)-biotinyl-L-lysyl-[protein] + malonyl-CoA. The protein operates within lipid metabolism; malonyl-CoA biosynthesis; malonyl-CoA from acetyl-CoA: step 1/1. Its function is as follows. Component of the acetyl coenzyme A carboxylase (ACC) complex. First, biotin carboxylase catalyzes the carboxylation of biotin on its carrier protein (BCCP) and then the CO(2) group is transferred by the carboxyltransferase to acetyl-CoA to form malonyl-CoA. The polypeptide is Acetyl-coenzyme A carboxylase carboxyl transferase subunit alpha (Marinomonas sp. (strain MWYL1)).